Here is a 529-residue protein sequence, read N- to C-terminus: MNNARPIRRALLSVSDKTGILEFAQALHAQGVELLSTGGTARLLADNGVPVIEVSDYTGHPEIMDGRVKTLHPKVHGGILARRGIDEIVMEQNNIKPIDLVAVNLYPFAATVAAEGCTLADAIENIDIGGPTMVRSTAKNHKDTTIIVNANDYGRVIAEMQANQGSTTLETRFDLAIAAFEHTAAYDGMIANYFGTKVPAHSKDECHEDSKFPRTYNTQLVKKQDLRYGENSHQTAAFYVDTHLDEASVATAVQLQGKALSYNNIADTDSALECVKEFDEPACVIVKHANPCGVAIGENLLEAYNRAFQTDPTSAFGGIIAFNGELDAATASAIVERQFVEVIIAPKVSQAARDVIAAKANVRVLECGQWASKTTSLDYKRVNGGLLLQDRDQGMVGIDDVKVVSKRQPTASEMKDLMFCWKVAKFVKSNAIVYAKNSMTIGVGAGQMSRVYSAKVAGIKAADEGLEVQDSVMASDAFFPFRDGIDAAAEAGISCIIQPGGSIRDEEIIAAADEHGMAMVFTGMRHFRH.

An MGS-like domain is found at 1–148 (MNNARPIRRA…KNHKDTTIIV (148 aa)).

It belongs to the PurH family.

It carries out the reaction (6R)-10-formyltetrahydrofolate + 5-amino-1-(5-phospho-beta-D-ribosyl)imidazole-4-carboxamide = 5-formamido-1-(5-phospho-D-ribosyl)imidazole-4-carboxamide + (6S)-5,6,7,8-tetrahydrofolate. It catalyses the reaction IMP + H2O = 5-formamido-1-(5-phospho-D-ribosyl)imidazole-4-carboxamide. Its pathway is purine metabolism; IMP biosynthesis via de novo pathway; 5-formamido-1-(5-phospho-D-ribosyl)imidazole-4-carboxamide from 5-amino-1-(5-phospho-D-ribosyl)imidazole-4-carboxamide (10-formyl THF route): step 1/1. The protein operates within purine metabolism; IMP biosynthesis via de novo pathway; IMP from 5-formamido-1-(5-phospho-D-ribosyl)imidazole-4-carboxamide: step 1/1. This Shewanella halifaxensis (strain HAW-EB4) protein is Bifunctional purine biosynthesis protein PurH.